The following is a 105-amino-acid chain: Large ribosomal subunit protein uL24 (105 aa).

Belongs to the universal ribosomal protein uL24 family. As to quaternary structure, part of the 50S ribosomal subunit.

One of two assembly initiator proteins, it binds directly to the 5'-end of the 23S rRNA, where it nucleates assembly of the 50S subunit. Functionally, one of the proteins that surrounds the polypeptide exit tunnel on the outside of the subunit. The protein is Large ribosomal subunit protein uL24 of Mycolicibacterium smegmatis (strain ATCC 700084 / mc(2)155) (Mycobacterium smegmatis).